The sequence spans 510 residues: tRNA-2-methylthio-N(6)-dimethylallyladenosine synthase (510 aa).

Residues 19–144 enclose the MTTase N-terminal domain; it reads RTYQVRTFGC…LPVLLERARH (126 aa). 6 residues coordinate [4Fe-4S] cluster: Cys28, Cys73, Cys107, Cys181, Cys185, and Cys188. In terms of domain architecture, Radical SAM core spans 167–397; it reads RESPYAAWVS…TALQDRITYE (231 aa). The TRAM domain maps to 400–470; sequence QAQTGRTLEV…PHYLEADDVS (71 aa). Residues 482-492 show a composition bias toward basic and acidic residues; it reads AWEARQARPEP. Positions 482-510 are disordered; the sequence is AWEARQARPEPESTGPRPVGLGLPTLRRA.

The protein belongs to the methylthiotransferase family. MiaB subfamily. Monomer. It depends on [4Fe-4S] cluster as a cofactor.

It is found in the cytoplasm. The enzyme catalyses N(6)-dimethylallyladenosine(37) in tRNA + (sulfur carrier)-SH + AH2 + 2 S-adenosyl-L-methionine = 2-methylsulfanyl-N(6)-dimethylallyladenosine(37) in tRNA + (sulfur carrier)-H + 5'-deoxyadenosine + L-methionine + A + S-adenosyl-L-homocysteine + 2 H(+). Catalyzes the methylthiolation of N6-(dimethylallyl)adenosine (i(6)A), leading to the formation of 2-methylthio-N6-(dimethylallyl)adenosine (ms(2)i(6)A) at position 37 in tRNAs that read codons beginning with uridine. The polypeptide is tRNA-2-methylthio-N(6)-dimethylallyladenosine synthase (Kineococcus radiotolerans (strain ATCC BAA-149 / DSM 14245 / SRS30216)).